A 151-amino-acid chain; its full sequence is D-aminoacyl-tRNA deacylase (151 aa).

Residues 137–138 (GP) carry the Gly-cisPro motif, important for rejection of L-amino acids motif.

The protein belongs to the DTD family. As to quaternary structure, homodimer.

Its subcellular location is the cytoplasm. It catalyses the reaction glycyl-tRNA(Ala) + H2O = tRNA(Ala) + glycine + H(+). The catalysed reaction is a D-aminoacyl-tRNA + H2O = a tRNA + a D-alpha-amino acid + H(+). An aminoacyl-tRNA editing enzyme that deacylates mischarged D-aminoacyl-tRNAs. Also deacylates mischarged glycyl-tRNA(Ala), protecting cells against glycine mischarging by AlaRS. Acts via tRNA-based rather than protein-based catalysis; rejects L-amino acids rather than detecting D-amino acids in the active site. By recycling D-aminoacyl-tRNA to D-amino acids and free tRNA molecules, this enzyme counteracts the toxicity associated with the formation of D-aminoacyl-tRNA entities in vivo and helps enforce protein L-homochirality. The polypeptide is D-aminoacyl-tRNA deacylase (Solibacter usitatus (strain Ellin6076)).